A 197-amino-acid polypeptide reads, in one-letter code: Imidazoleglycerol-phosphate dehydratase (197 aa).

It belongs to the imidazoleglycerol-phosphate dehydratase family.

Its subcellular location is the cytoplasm. It carries out the reaction D-erythro-1-(imidazol-4-yl)glycerol 3-phosphate = 3-(imidazol-4-yl)-2-oxopropyl phosphate + H2O. Its pathway is amino-acid biosynthesis; L-histidine biosynthesis; L-histidine from 5-phospho-alpha-D-ribose 1-diphosphate: step 6/9. The polypeptide is Imidazoleglycerol-phosphate dehydratase (Rhodopseudomonas palustris (strain HaA2)).